We begin with the raw amino-acid sequence, 348 residues long: Probable dual-specificity RNA methyltransferase RlmN (348 aa).

The Proton acceptor role is filled by E93. In terms of domain architecture, Radical SAM core spans 99-323 (TEKRLTACLS…QTRLSNSGIN (225 aa)). The cysteines at positions 106 and 338 are disulfide-linked. [4Fe-4S] cluster contacts are provided by C113, C117, and C120. Residues 160–161 (GE), S190, 219–221 (SLH), and N295 each bind S-adenosyl-L-methionine. The active-site S-methylcysteine intermediate is the C338.

It belongs to the radical SAM superfamily. RlmN family. [4Fe-4S] cluster is required as a cofactor.

The protein localises to the cytoplasm. The catalysed reaction is adenosine(2503) in 23S rRNA + 2 reduced [2Fe-2S]-[ferredoxin] + 2 S-adenosyl-L-methionine = 2-methyladenosine(2503) in 23S rRNA + 5'-deoxyadenosine + L-methionine + 2 oxidized [2Fe-2S]-[ferredoxin] + S-adenosyl-L-homocysteine. It catalyses the reaction adenosine(37) in tRNA + 2 reduced [2Fe-2S]-[ferredoxin] + 2 S-adenosyl-L-methionine = 2-methyladenosine(37) in tRNA + 5'-deoxyadenosine + L-methionine + 2 oxidized [2Fe-2S]-[ferredoxin] + S-adenosyl-L-homocysteine. Functionally, specifically methylates position 2 of adenine 2503 in 23S rRNA and position 2 of adenine 37 in tRNAs. The chain is Probable dual-specificity RNA methyltransferase RlmN from Prochlorococcus marinus subsp. pastoris (strain CCMP1986 / NIES-2087 / MED4).